A 373-amino-acid polypeptide reads, in one-letter code: Peptide chain release factor subunit 1 (373 aa).

Belongs to the eukaryotic release factor 1 family. In terms of assembly, heterodimer of two subunits, one of which binds GTP.

The protein localises to the cytoplasm. In terms of biological role, directs the termination of nascent peptide synthesis (translation) in response to the termination codons UAA, UAG and UGA. The polypeptide is Peptide chain release factor subunit 1 (prf1) (Aeropyrum pernix (strain ATCC 700893 / DSM 11879 / JCM 9820 / NBRC 100138 / K1)).